Consider the following 329-residue polypeptide: Malate dehydrogenase 2 (329 aa).

12–18 contributes to the NAD(+) binding site; the sequence is GAAGQIA. Residues arginine 93 and arginine 99 each coordinate substrate. Residues asparagine 106, glutamine 113, and 130–132 each bind NAD(+); that span reads VGN. 2 residues coordinate substrate: asparagine 132 and arginine 163. Histidine 188 acts as the Proton acceptor in catalysis.

It belongs to the LDH/MDH superfamily. MDH type 2 family.

It catalyses the reaction (S)-malate + NAD(+) = oxaloacetate + NADH + H(+). Catalyzes the reversible oxidation of malate to oxaloacetate. This Burkholderia thailandensis (strain ATCC 700388 / DSM 13276 / CCUG 48851 / CIP 106301 / E264) protein is Malate dehydrogenase 2.